Reading from the N-terminus, the 351-residue chain is Putative aminodehydroquinate synthase (351 aa).

NAD(+)-binding positions include 65 to 68 (EPTK), 97 to 101 (GTTTD), 121 to 122 (TS), Lys-134, Lys-143, and 161 to 164 (YLTT). 3 residues coordinate Zn(2+): Glu-176, His-225, and His-241.

This sequence belongs to the sugar phosphate cyclases superfamily. aDHQS family. NAD(+) serves as cofactor. The cofactor is Co(2+). Requires Zn(2+) as cofactor.

In terms of biological role, may catalyze the conversion of 3,4-dideoxy-4-amino-D-arabino-heptulosonate 7-phosphate (aDAHP) to 5-deoxy-5-amino-3-dehydroquinate (aDHQ). Probably involved in the formation of 3-amino-5-hydroxybenzoic acid (AHBA), the precursor of rifamycin and related ansamycins. This chain is Putative aminodehydroquinate synthase, found in Amycolatopsis mediterranei (strain S699) (Nocardia mediterranei).